A 652-amino-acid polypeptide reads, in one-letter code: Starch synthase 1, chloroplastic/amyloplastic (652 aa).

The transit peptide at 1 to 49 directs the protein to the chloroplast; the sequence is MASLQISGSVKFEPFVGFNRIRHFRPIASLGFPRFRRRFSIGRSLLLRR. K156 is an ADP-alpha-D-glucose binding site.

Belongs to the glycosyltransferase 1 family. Bacterial/plant glycogen synthase subfamily. In terms of tissue distribution, expressed in roots, leaves, stems, buds and flowers.

The protein resides in the plastid. Its subcellular location is the chloroplast. The protein localises to the amyloplast. The enzyme catalyses [(1-&gt;4)-alpha-D-glucosyl](n) + ADP-alpha-D-glucose = [(1-&gt;4)-alpha-D-glucosyl](n+1) + ADP + H(+). The protein operates within glycan biosynthesis; starch biosynthesis. Involved in the synthesis of short glycan chains within amylopectin in leaves. Is required to generate chains up to about a degree of polymerization of 10 (DP10). This chain is Starch synthase 1, chloroplastic/amyloplastic (SS1), found in Arabidopsis thaliana (Mouse-ear cress).